Consider the following 766-residue polypeptide: General transcription and DNA repair factor IIH helicase/translocase subunit XPB2 (766 aa).

The tract at residues methionine 1–glutamate 56 is disordered. A compositionally biased stretch (acidic residues) spans aspartate 31–arginine 41. Basic and acidic residues predominate over residues aspartate 42–glutamate 56. One can recognise a Helicase ATP-binding domain in the interval methionine 293–leucine 455. Leucine 306–serine 313 contributes to the ATP binding site. The DEVH box signature appears at aspartate 408–histidine 411. The region spanning arginine 510–serine 676 is the Helicase C-terminal domain. Polar residues predominate over residues serine 739 to serine 748. Positions serine 739–valine 766 are disordered. A Nuclear localization signal motif is present at residues lysine 749–tyrosine 765. The span at arginine 757–valine 766 shows a compositional bias: basic residues.

This sequence belongs to the helicase family. RAD25/XPB subfamily. Component of the 7-subunit TFIIH core complex composed of XPB, XPD, TFB1/GTF2H1, GTF2H2/P44, TFB4/GTF2H3, TFB2/GTF2H4 and TFB5/GTF2H5, which is active in NER. The core complex associates with the 3-subunit CDK-activating kinase (CAK) module composed of CYCH1/cyclin H1, CDKD and MAT1/At4g30820 to form the 10-subunit holoenzyme (holo-TFIIH) active in transcription. As to expression, expressed ubiquitously.

The protein localises to the nucleus. It carries out the reaction Couples ATP hydrolysis with the unwinding of duplex DNA by translocating in the 3'-5' direction.. The enzyme catalyses ATP + H2O = ADP + phosphate + H(+). ATP-dependent 3'-5' DNA helicase/translocase; binds dsDNA rather than ssDNA, unzipping it in a translocase rather than classical helicase activity. Component of the general transcription and DNA repair factor IIH (TFIIH) core complex. When complexed to CDK-activating kinase (CAK), involved in RNA transcription by RNA polymerase II. The ATPase activity of XPB/ERCC3, but not its helicase activity, is required for DNA opening; it may wrap around the damaged DNA wedging it open, causing localized melting and twisting that allows XPD/ERCC2 helicase to anchor. The ATP-dependent helicase activity of XPB/ERCC3 may be required for promoter escape. Also involved in transcription-coupled nucleotide excision repair (NER) of damaged DNA. In NER, TFIIH acts by opening DNA around the lesion to allow the excision of the damaged oligonucleotide and its replacement by a new DNA fragment. The structure of the TFIIH transcription complex differs from the NER-TFIIH complex. Partially complements UV sensitivity of a yeast SSL2 mutation. The protein is General transcription and DNA repair factor IIH helicase/translocase subunit XPB2 (XPB2) of Arabidopsis thaliana (Mouse-ear cress).